We begin with the raw amino-acid sequence, 880 residues long: MATSNDIRATFLNYFARNGHEVVDSSPLVPRNDPTLLFVNSGMVQFKNVFTGQERRPYSRATTSQKCVRAGGKHNDLDNVGYTARHHTFFEMLGNFSFGDYFKEQAITHAWNVVTREFGLPAEKLLVTVYQDDDDAARLWKSIAGLPEERIIRIASSDNFWRMGDTGPCGPCSEIFYDHGPSIPGGPPGSPDEDGDRFIEIWNLVFMQYEEGPPGTRVNLPRPSIDTGMGLERLAAVLQGKHDNYDTDTLRALIVASAEATGQDPDGPHKTSHRVVADHLRSTSFLMADGVLPSNEGRGYVLRRIMRRAMRHAHLMGMTEPLLYRLVPALVRQMGAAYGELVQAQSLITETLRLEETRFKAMLDRGLAMLSDEVGKLGEGQTLSGDVAFKLYDTYGFPLDLTQDALREQGRAVDVAGFDAAMTEQRRRARAAWSGSGDAAQEGVWFEIRDRVGGTEFLGYSTEKAEAEIIALVANGALTETAPAGTEVAVVLNQTPFYGESGGQVGDTGIITGPNGLRIIISDTQKKLGDVFVHLGRVESGLAQIGQPVEVVVDHQRRSAIRAHHSATHLLHEALRRRLGTHVAQKGSLNAPDRLRFDVSQPTPITRDDLAVVEAEVNALIRQNSPVNTRLMTPEQAVAEGAMALFGEKYGDEVRVVSMGAPVEEGKPAYSIELCGGTHVGRTGDIGLFRITGESAVSAGVRRIEAVTGEAALAQIAEAERRLQETASLLRVAPGDVTTRVASLLEERKKLEAQLADAQRKLATGGAADKVEEVGGVKLAARNLGDVAPKELKGLAEAIARQLESGVVALVSTAEGKASVVVGVTADLTSRFDAVTLVRAASAAVGGKGGGGRPDMAQAGGPDAAQADAALQAVRDAMAA.

4 residues coordinate Zn(2+): H565, H569, C675, and H679.

This sequence belongs to the class-II aminoacyl-tRNA synthetase family. Zn(2+) is required as a cofactor.

Its subcellular location is the cytoplasm. The enzyme catalyses tRNA(Ala) + L-alanine + ATP = L-alanyl-tRNA(Ala) + AMP + diphosphate. Its function is as follows. Catalyzes the attachment of alanine to tRNA(Ala) in a two-step reaction: alanine is first activated by ATP to form Ala-AMP and then transferred to the acceptor end of tRNA(Ala). Also edits incorrectly charged Ser-tRNA(Ala) and Gly-tRNA(Ala) via its editing domain. This chain is Alanine--tRNA ligase, found in Granulibacter bethesdensis (strain ATCC BAA-1260 / CGDNIH1).